Reading from the N-terminus, the 396-residue chain is Elongation factor Tu (396 aa).

The 195-residue stretch at 11–205 (KPHVNIGTIG…TVDEYVPTPE (195 aa)) folds into the tr-type G domain. The interval 20–27 (GHVDHGKT) is G1. Position 20-27 (20-27 (GHVDHGKT)) interacts with GTP. Thr27 is a binding site for Mg(2+). Positions 61–65 (GITIN) are G2. Residues 82–85 (DAPG) are G3. GTP is bound by residues 82 to 86 (DAPGH) and 137 to 140 (NKTD). The G4 stretch occupies residues 137–140 (NKTD). The segment at 175-177 (SAL) is G5.

This sequence belongs to the TRAFAC class translation factor GTPase superfamily. Classic translation factor GTPase family. EF-Tu/EF-1A subfamily. As to quaternary structure, monomer.

Its subcellular location is the cytoplasm. It catalyses the reaction GTP + H2O = GDP + phosphate + H(+). GTP hydrolase that promotes the GTP-dependent binding of aminoacyl-tRNA to the A-site of ribosomes during protein biosynthesis. The sequence is that of Elongation factor Tu from Latilactobacillus sakei subsp. sakei (strain 23K) (Lactobacillus sakei subsp. sakei).